Consider the following 617-residue polypeptide: Pentatricopeptide repeat-containing protein At4g18520, chloroplastic (617 aa).

The transit peptide at 1-19 (MFSLSLIQPRLRISEIPVT) directs the protein to the chloroplast. 14 PPR repeats span residues 116–146 (VIYF…MPEK), 147–181 (NTVT…GIRF), 183–217 (NERM…GVGN), 222–247 (SSLV…MEEK), 248–282 (DVIS…WFLP), 283–317 (NEFT…MIKT), 318–348 (DVFV…MSNR), 349–383 (NTVT…HLIA), 384–418 (NNLT…SIEK), 419–449 (NVYI…LPSR), 450–484 (DVVS…GVEP), 485–519 (NPFT…HALS), 520–550 (NVFV…MPEK), and 551–585 (NLVS…GFEV).

Belongs to the PPR family. PCMP-A subfamily. In terms of assembly, interacts with MORF8/RIP1, MORF2/RIP2 and MORF9/RIP9. Expressed specifically in aerial greening tissues, such as cotyledons, rosette leaves, cauline leaves, stems, sepals, stamens, carpels and siliques.

Its subcellular location is the plastid. It localises to the chloroplast. Required for proper chloroplast development. Involved in the regulation of plastid gene expression probably through regulation of plastid-encoded polymerase (PEP) dependent chloroplast transcription. Required for RNA editing of several chloroplastic transcripts, especially accD transcripts. Required for processing of the chloroplastic rpoA pre-mRNA. Required for the monocistronic rpoA transcript processing from the rpl23-rpl2-rps19-rpl22-rps3-rpl16-rpl14-rps8-rpl36-rps11-rpoA polycistron. Binds the intergenic sequence of rps11-rpoA for rpoA monocistronic RNA cleavage. The protein is Pentatricopeptide repeat-containing protein At4g18520, chloroplastic (PCMP-A2) of Arabidopsis thaliana (Mouse-ear cress).